The chain runs to 307 residues: F-box protein At5g03100 (307 aa).

The 47-residue stretch at 8-54 (VDFISSLPDEILHHILANTPTKLAIRTSVLSKRWKHVWYETPSISIV) folds into the F-box domain.

In Arabidopsis thaliana (Mouse-ear cress), this protein is F-box protein At5g03100.